Reading from the N-terminus, the 337-residue chain is Inositol 2-dehydrogenase (337 aa).

This sequence belongs to the Gfo/Idh/MocA family. As to quaternary structure, homotetramer.

The catalysed reaction is myo-inositol + NAD(+) = scyllo-inosose + NADH + H(+). Involved in the oxidation of myo-inositol (MI) to 2-keto-myo-inositol (2KMI or 2-inosose). The protein is Inositol 2-dehydrogenase of Arthrobacter sp. (strain FB24).